Consider the following 190-residue polypeptide: Hypoxanthine/guanine phosphoribosyltransferase (190 aa).

Belongs to the purine/pyrimidine phosphoribosyltransferase family. Archaeal HPRT subfamily. In terms of assembly, homodimer.

Its subcellular location is the cytoplasm. It carries out the reaction IMP + diphosphate = hypoxanthine + 5-phospho-alpha-D-ribose 1-diphosphate. The catalysed reaction is GMP + diphosphate = guanine + 5-phospho-alpha-D-ribose 1-diphosphate. The protein operates within purine metabolism; IMP biosynthesis via salvage pathway; IMP from hypoxanthine: step 1/1. Its function is as follows. Catalyzes a salvage reaction resulting in the formation of IMP that is energically less costly than de novo synthesis. This Methanothrix thermoacetophila (strain DSM 6194 / JCM 14653 / NBRC 101360 / PT) (Methanosaeta thermophila) protein is Hypoxanthine/guanine phosphoribosyltransferase.